A 272-amino-acid chain; its full sequence is STPAITLENPDIKYPLRLIDKEVVNHDTRRFRFALPSPEHILGLPVGQHIYLSARIDGNLVIRPYTPVSSDDDKGFVDLVIKVYFKDTHPKFPAGGKMSQYLESMKIGDTIEFRGPNGLLVYQGKGKFAIRPDKKSSPVIKTVKSVGMIAGGTGITPMLQVIRAIMKDPDDHTVCHLLFANQTEKDILLRPELEELRNEHSARFKLWYTVDRAPEAWDYSQGFVNEEMIRDHLPPPEEEPLVLMCGPPPMIQYACLPNLERVGHPKERCFAF.

One can recognise an FAD-binding FR-type domain in the interval 11–123; sequence DIKYPLRLID…RGPNGLLVYQ (113 aa). Position 13 is an N6-acetyllysine (Lys-13). Tyr-14 is modified (phosphotyrosine). N6-acetyllysine is present on Lys-21. FAD contacts are provided by Arg-63, Pro-64, Tyr-65, Val-80, Lys-82, and Tyr-84. Lys-91 is modified (N6-acetyllysine). Lys-97, Met-98, Ser-99, and Thr-156 together coordinate FAD.

Belongs to the flavoprotein pyridine nucleotide cytochrome reductase family. In terms of assembly, component of a complex composed of cytochrome b5, NADH-cytochrome b5 reductase (CYB5R3) and MTARC2. Interacts with MTLN; the interaction is required to maintain cellular lipid composition and leads to stimulation of mitochondrial respiratory complex I activity. The cofactor is FAD.

The protein resides in the endoplasmic reticulum membrane. It localises to the mitochondrion outer membrane. The catalysed reaction is 2 Fe(III)-[cytochrome b5] + NADH = 2 Fe(II)-[cytochrome b5] + NAD(+) + H(+). Its function is as follows. Catalyzes the reduction of two molecules of cytochrome b5 using NADH as the electron donor. This chain is NADH-cytochrome b5 reductase 3 (CYB5R3), found in Sus scrofa (Pig).